Reading from the N-terminus, the 447-residue chain is Tubulin beta chain (447 aa).

8 residues coordinate GTP: glutamine 11, glutamate 69, serine 138, glycine 142, threonine 143, glycine 144, asparagine 204, and asparagine 226. Residue glutamate 69 participates in Mg(2+) binding. Residues 424-447 (QYQDASISEGEEDYEEEPQVENEE) form a disordered region. A compositionally biased stretch (acidic residues) spans 432–447 (EGEEDYEEEPQVENEE).

The protein belongs to the tubulin family. Dimer of alpha and beta chains. A typical microtubule is a hollow water-filled tube with an outer diameter of 25 nm and an inner diameter of 15 nM. Alpha-beta heterodimers associate head-to-tail to form protofilaments running lengthwise along the microtubule wall with the beta-tubulin subunit facing the microtubule plus end conferring a structural polarity. Microtubules usually have 13 protofilaments but different protofilament numbers can be found in some organisms and specialized cells. It depends on Mg(2+) as a cofactor.

The protein resides in the cytoplasm. It is found in the cytoskeleton. Functionally, tubulin is the major constituent of microtubules, a cylinder consisting of laterally associated linear protofilaments composed of alpha- and beta-tubulin heterodimers. Microtubules grow by the addition of GTP-tubulin dimers to the microtubule end, where a stabilizing cap forms. Below the cap, tubulin dimers are in GDP-bound state, owing to GTPase activity of alpha-tubulin. The polypeptide is Tubulin beta chain (Uncinula necator (Grape powdery mildew)).